The chain runs to 1047 residues: Carbamoyl phosphate synthase arginine-specific large chain (1047 aa).

Residues 1–401 (MPKRTDIQSV…GLQKAVRSLE (401 aa)) form a carboxyphosphate synthetic domain region. Arg-129, Arg-169, Gly-175, Gly-176, Lys-208, Ile-210, Glu-215, Gly-241, Val-242, His-243, Gln-284, and Glu-298 together coordinate ATP. One can recognise an ATP-grasp 1 domain in the interval 133–327 (RQLMHELHEP…IARMAAKLSL (195 aa)). Mg(2+) is bound by residues Gln-284, Glu-298, and Asn-300. The Mn(2+) site is built by Gln-284, Glu-298, and Asn-300. Residues 402-549 (IKTHGLSLPS…YSSWTGENDL (148 aa)) are oligomerization domain. The tract at residues 550-933 (LLPEKAKERV…AFRKAFAWGE (384 aa)) is carbamoyl phosphate synthetic domain. One can recognise an ATP-grasp 2 domain in the interval 676-865 (YEFMRSVEVP…LITYTIDVLF (190 aa)). Positions 712, 750, 756, 781, 782, 783, 784, 824, and 836 each coordinate ATP. Gln-824, Glu-836, and Asn-838 together coordinate Mg(2+). Mn(2+)-binding residues include Gln-824, Glu-836, and Asn-838. The tract at residues 934–1047 (EQTPALFRKK…PFLLPDVVMN (114 aa)) is allosteric domain. In terms of domain architecture, MGS-like spans 937–1047 (PALFRKKGSV…PFLLPDVVMN (111 aa)).

Belongs to the CarB family. Composed of two chains; the small (or glutamine) chain promotes the hydrolysis of glutamine to ammonia, which is used by the large (or ammonia) chain to synthesize carbamoyl phosphate. Tetramer of heterodimers (alpha,beta)4. It depends on Mg(2+) as a cofactor. Mn(2+) serves as cofactor.

It carries out the reaction hydrogencarbonate + L-glutamine + 2 ATP + H2O = carbamoyl phosphate + L-glutamate + 2 ADP + phosphate + 2 H(+). It catalyses the reaction hydrogencarbonate + NH4(+) + 2 ATP = carbamoyl phosphate + 2 ADP + phosphate + 2 H(+). It participates in amino-acid biosynthesis; L-arginine biosynthesis; carbamoyl phosphate from bicarbonate: step 1/1. Large subunit of the glutamine-dependent carbamoyl phosphate synthetase (CPSase). CPSase catalyzes the formation of carbamoyl phosphate from the ammonia moiety of glutamine, carbonate, and phosphate donated by ATP, constituting the first step of the biosynthetic pathway leading to arginine and/or urea. The large subunit (synthetase) binds the substrates ammonia (free or transferred from glutamine from the small subunit), hydrogencarbonate and ATP and carries out an ATP-coupled ligase reaction, activating hydrogencarbonate by forming carboxy phosphate which reacts with ammonia to form carbamoyl phosphate. This is Carbamoyl phosphate synthase arginine-specific large chain from Halalkalibacterium halodurans (strain ATCC BAA-125 / DSM 18197 / FERM 7344 / JCM 9153 / C-125) (Bacillus halodurans).